A 953-amino-acid polypeptide reads, in one-letter code: Isoleucine--tRNA ligase (953 aa).

Residues 58–68 (PYANGSIHIGH) carry the 'HIGH' region motif. Glu-577 is an L-isoleucyl-5'-AMP binding site. Residues 618 to 622 (KMSKS) carry the 'KMSKS' region motif. Lys-621 is an ATP binding site. Positions 916, 919, 936, and 939 each coordinate Zn(2+).

It belongs to the class-I aminoacyl-tRNA synthetase family. IleS type 1 subfamily. In terms of assembly, monomer. Zn(2+) serves as cofactor.

The protein resides in the cytoplasm. The catalysed reaction is tRNA(Ile) + L-isoleucine + ATP = L-isoleucyl-tRNA(Ile) + AMP + diphosphate. Functionally, catalyzes the attachment of isoleucine to tRNA(Ile). As IleRS can inadvertently accommodate and process structurally similar amino acids such as valine, to avoid such errors it has two additional distinct tRNA(Ile)-dependent editing activities. One activity is designated as 'pretransfer' editing and involves the hydrolysis of activated Val-AMP. The other activity is designated 'posttransfer' editing and involves deacylation of mischarged Val-tRNA(Ile). The chain is Isoleucine--tRNA ligase from Aeromonas hydrophila subsp. hydrophila (strain ATCC 7966 / DSM 30187 / BCRC 13018 / CCUG 14551 / JCM 1027 / KCTC 2358 / NCIMB 9240 / NCTC 8049).